Consider the following 233-residue polypeptide: MLKIGTFDLEERPAIVAAISNEPLQQCKTAAEHGADILEIRFDLLGITTSKEAANLLRMLKGTTSLPCIATNRLQSQGGNWEGTEENRIALLEDIMHLTDAVDIELETDEQLRDRIVKKAKEESKTTIISSHDFERTPDKETLKSILDHSHDAGADIAKLAVMPENMQDVLNLLEVTLEVDDVCTISMGKLGKHTRIIAPLYGSKLTYASVSDAVAPGQLKVEDLKKAMEMME.

Residues 39-41 (EIR) and R73 each bind 3-dehydroquinate. The Proton donor/acceptor role is filled by H132. K159 serves as the catalytic Schiff-base intermediate with substrate. 3-dehydroquinate is bound by residues R196 and Q219.

This sequence belongs to the type-I 3-dehydroquinase family. As to quaternary structure, homodimer.

The catalysed reaction is 3-dehydroquinate = 3-dehydroshikimate + H2O. The protein operates within metabolic intermediate biosynthesis; chorismate biosynthesis; chorismate from D-erythrose 4-phosphate and phosphoenolpyruvate: step 3/7. Its function is as follows. Involved in the third step of the chorismate pathway, which leads to the biosynthesis of aromatic amino acids. Catalyzes the cis-dehydration of 3-dehydroquinate (DHQ) and introduces the first double bond of the aromatic ring to yield 3-dehydroshikimate. This Methanococcoides burtonii (strain DSM 6242 / NBRC 107633 / OCM 468 / ACE-M) protein is 3-dehydroquinate dehydratase.